Consider the following 996-residue polypeptide: GPI ethanolamine phosphate transferase 1 (996 aa).

Topologically, residues 1-8 are cytoplasmic; the sequence is MAAFPRFR. The chain crosses the membrane as a helical span at residues 9-29; it reads FLAIAVIFHFAYIFSIFDIYF. Residues 30–463 are Lumenal-facing; that stretch reads VSPIETGMRL…LQTYDWLFLR (434 aa). 3 N-linked (GlcNAc...) asparagine glycosylation sites follow: Asn-47, Asn-147, and Asn-210. Residues 464–484 traverse the membrane as a helical segment; sequence ALITIGYLGWIAYALTTVVDL. Residues 485–495 lie on the Cytoplasmic side of the membrane; sequence HVLHGRVRPSR. A helical transmembrane segment spans residues 496–516; that stretch reads TLGGGLFFTSVLVALYASLVI. The Lumenal segment spans residues 517-518; sequence SK. Residues 519–539 form a helical membrane-spanning segment; sequence SPLTYYVYAFFPVFFWEEVYA. Topologically, residues 540–560 are cytoplasmic; it reads HRESLAAGRKELLGHINSGGS. Residues 561 to 581 form a helical membrane-spanning segment; sequence VASFVLNSALYVGVIESLALG. Topologically, residues 582–586 are lumenal; that stretch reads YIHRE. The chain crosses the membrane as a helical span at residues 587-607; sequence ILSVLFVLGSFWPFTHGLSFL. Topologically, residues 608-612 are cytoplasmic; that stretch reads KKHGA. The helical transmembrane segment at 613–633 threads the bilayer; sequence LSATWFLACIAMSTFTLLPAM. Residues 634 to 637 lie on the Lumenal side of the membrane; sequence KAEN. A helical membrane pass occupies residues 638–658; that stretch reads VNLITIGGVLMVVIGLLYLIF. Over 659-681 the chain is Cytoplasmic; it reads EDFVLADFSWNAKPTSRNHLSRS. A helical membrane pass occupies residues 682–702; the sequence is LVGIQVGLTVLSIIITRSSAL. Residues 703–715 lie on the Lumenal side of the membrane; that stretch reads SLQAKQGLPRGNQ. Residues 716–734 form a helical membrane-spanning segment; it reads IMGWVTLVASLLMPLAYRL. Topologically, residues 735 to 754 are cytoplasmic; the sequence is RPNNHYMHRILVIFLTCAPT. A helical membrane pass occupies residues 755–775; it reads FVILTISYEGLFYLVFSALLV. Residues 776–822 are Lumenal-facing; sequence SWVRLEHAVQKFTSSKAPQTAATKKPTTTTESHLPAPFRPLTLHDAR. Residues 823–843 form a helical membrane-spanning segment; that stretch reads VALFFFILLQSAFFSTGNVAS. The Cytoplasmic segment spans residues 844-865; that stretch reads VSSFSLDSVYRLIPIFDPFSQG. The chain crosses the membrane as a helical span at residues 866–886; that stretch reads AMLILKLMIPFALISANLGIL. At 887 to 895 the chain is on the lumenal side; that stretch reads NKRLGVAPS. The chain crosses the membrane as a helical span at residues 896–916; it reads ALFMVVMGISDILTLYFFWVV. The Cytoplasmic segment spans residues 917 to 932; it reads KDEGSWLEIGSTISHF. A helical membrane pass occupies residues 933–953; the sequence is VIASLLCVFVSALEPVSAAFI. Residues 954 to 996 are Lumenal-facing; that stretch reads AGVEVGEESELKEEGKVAEKVVEKVNEAVEGLVSGGDGGGDES.

It belongs to the PIGG/PIGN/PIGO family. PIGN subfamily.

Its subcellular location is the endoplasmic reticulum membrane. It participates in glycolipid biosynthesis; glycosylphosphatidylinositol-anchor biosynthesis. Ethanolamine phosphate transferase involved in glycosylphosphatidylinositol-anchor biosynthesis. Transfers ethanolamine phosphate to the first alpha-1,4-linked mannose of the glycosylphosphatidylinositol precursor of GPI-anchor. This chain is GPI ethanolamine phosphate transferase 1 (mcd-4), found in Neurospora crassa (strain ATCC 24698 / 74-OR23-1A / CBS 708.71 / DSM 1257 / FGSC 987).